A 563-amino-acid polypeptide reads, in one-letter code: Arginine--tRNA ligase (563 aa).

The 'HIGH' region motif lies at 121 to 131; sequence PNIAKPFSIGH.

This sequence belongs to the class-I aminoacyl-tRNA synthetase family. As to quaternary structure, monomer.

It is found in the cytoplasm. The enzyme catalyses tRNA(Arg) + L-arginine + ATP = L-arginyl-tRNA(Arg) + AMP + diphosphate. The sequence is that of Arginine--tRNA ligase from Streptococcus pyogenes serotype M12 (strain MGAS2096).